The chain runs to 470 residues: Xaa-Pro aminopeptidase 2 (470 aa).

Mn(2+) is bound by residues aspartate 287, aspartate 299, histidine 382, glutamate 413, and glutamate 437.

It belongs to the peptidase M24B family. In terms of assembly, homodimer. Mn(2+) serves as cofactor.

The catalysed reaction is Release of any N-terminal amino acid, including proline, that is linked to proline, even from a dipeptide or tripeptide.. The chain is Xaa-Pro aminopeptidase 2 (pepP2) from Streptomyces coelicolor (strain ATCC BAA-471 / A3(2) / M145).